The following is a 290-amino-acid chain: Elongation factor Ts (290 aa).

Residues 83–86 (TDFV) are involved in Mg(2+) ion dislocation from EF-Tu.

Belongs to the EF-Ts family.

It localises to the cytoplasm. Associates with the EF-Tu.GDP complex and induces the exchange of GDP to GTP. It remains bound to the aminoacyl-tRNA.EF-Tu.GTP complex up to the GTP hydrolysis stage on the ribosome. In Aquifex aeolicus (strain VF5), this protein is Elongation factor Ts (tsf).